We begin with the raw amino-acid sequence, 219 residues long: Ribonuclease HII (219 aa).

Residues 22 to 219 form the RNase H type-2 domain; sequence GLVAGVDEVG…LLAMRMEAVV (198 aa). Asp-28, Glu-29, and Asp-125 together coordinate a divalent metal cation.

The protein belongs to the RNase HII family. Requires Mn(2+) as cofactor. Mg(2+) serves as cofactor.

The protein resides in the cytoplasm. The enzyme catalyses Endonucleolytic cleavage to 5'-phosphomonoester.. Endonuclease that specifically degrades the RNA of RNA-DNA hybrids. The polypeptide is Ribonuclease HII (Granulibacter bethesdensis (strain ATCC BAA-1260 / CGDNIH1)).